The primary structure comprises 442 residues: Tol-Pal system protein TolB (442 aa).

Positions Met-1 to Ala-26 are cleaved as a signal peptide.

Belongs to the TolB family. The Tol-Pal system is composed of five core proteins: the inner membrane proteins TolA, TolQ and TolR, the periplasmic protein TolB and the outer membrane protein Pal. They form a network linking the inner and outer membranes and the peptidoglycan layer.

It is found in the periplasm. Part of the Tol-Pal system, which plays a role in outer membrane invagination during cell division and is important for maintaining outer membrane integrity. The polypeptide is Tol-Pal system protein TolB (Nitratidesulfovibrio vulgaris (strain ATCC 29579 / DSM 644 / CCUG 34227 / NCIMB 8303 / VKM B-1760 / Hildenborough) (Desulfovibrio vulgaris)).